Reading from the N-terminus, the 242-residue chain is uncharacterized protein (242 aa).

S-adenosyl-L-methionine-binding residues include G198, I218, and L227.

This sequence belongs to the class IV-like SAM-binding methyltransferase superfamily. RNA methyltransferase TrmH family.

This is an uncharacterized protein from Mycoplasma genitalium (strain ATCC 33530 / DSM 19775 / NCTC 10195 / G37) (Mycoplasmoides genitalium).